A 211-amino-acid chain; its full sequence is Adenylate kinase (211 aa).

10–15 (GSGKGT) is a binding site for ATP. The NMP stretch occupies residues 30-59 (STGDLFRENILNSTALGQEIKKIVERGELV). AMP-binding positions include Thr-31, Arg-36, 57 to 59 (ELV), 85 to 88 (GFPR), and Gln-92. The segment at 121–158 (GRRICKSCNNIFNIYTLTTKKNGICDVCGGDLYQREDD) is LID. Arg-122 provides a ligand contact to ATP. 2 residues coordinate Zn(2+): Cys-125 and Cys-128. 131–132 (IF) is a binding site for ATP. 2 residues coordinate Zn(2+): Cys-145 and Cys-148. 2 residues coordinate AMP: Arg-155 and Arg-166. Val-194 is a binding site for ATP.

The protein belongs to the adenylate kinase family. In terms of assembly, monomer.

Its subcellular location is the cytoplasm. It carries out the reaction AMP + ATP = 2 ADP. The protein operates within purine metabolism; AMP biosynthesis via salvage pathway; AMP from ADP: step 1/1. In terms of biological role, catalyzes the reversible transfer of the terminal phosphate group between ATP and AMP. Plays an important role in cellular energy homeostasis and in adenine nucleotide metabolism. The polypeptide is Adenylate kinase (Borreliella burgdorferi (strain ATCC 35210 / DSM 4680 / CIP 102532 / B31) (Borrelia burgdorferi)).